A 156-amino-acid chain; its full sequence is Small ribosomal subunit protein uS7 (156 aa).

The protein belongs to the universal ribosomal protein uS7 family. In terms of assembly, part of the 30S ribosomal subunit. Contacts proteins S9 and S11.

Its function is as follows. One of the primary rRNA binding proteins, it binds directly to 16S rRNA where it nucleates assembly of the head domain of the 30S subunit. Is located at the subunit interface close to the decoding center, probably blocks exit of the E-site tRNA. This Buchnera aphidicola subsp. Cinara cedri (strain Cc) protein is Small ribosomal subunit protein uS7.